Reading from the N-terminus, the 288-residue chain is dTDP-4-keto-6-deoxy-D-glucose reductase (288 aa).

NADH is bound by residues 12–14, 38–39, 62–64, tyrosine 127, and lysine 131; these read GML, DI, and AWT. Residues 13-14, 38-39, 62-64, tyrosine 127, and lysine 131 contribute to the NADPH site; these read ML, DI, and AWT. Residue tyrosine 127 is the Proton donor/acceptor of the active site.

It belongs to the dTDP-4-dehydrorhamnose reductase family. It depends on Mg(2+) as a cofactor.

It functions in the pathway antibiotic biosynthesis; novobiocin biosynthesis. In terms of biological role, reduces the product formed from the reaction of NovW with dTDP-4-keto-6-deoxy-D-glucose to result in dTDP-5-methyl-L-rhamnose in the novobiocin biosynthesis pathway, an aminocoumarin family antibiotic that targets bacterial DNA gyrases. This chain is dTDP-4-keto-6-deoxy-D-glucose reductase (novS), found in Streptomyces niveus (Streptomyces spheroides).